The primary structure comprises 96 residues: Acylphosphatase (96 aa).

An Acylphosphatase-like domain is found at 11 to 96 (ARRWYVRGRV…ITSYDSFRIR (86 aa)). Residues Arg-26 and Asn-44 contribute to the active site.

It belongs to the acylphosphatase family.

The enzyme catalyses an acyl phosphate + H2O = a carboxylate + phosphate + H(+). This is Acylphosphatase (acyP) from Solibacter usitatus (strain Ellin6076).